The sequence spans 363 residues: Heme A synthase (363 aa).

A run of 8 helical transmembrane segments spans residues 21-41 (ALVRGWLYVVLLVLFALVLVG), 107-127 (RLLARSVGLVFALPLLFFWVS), 138-158 (LVGILLLGGLQGAIGWWMVAS), 174-194 (HLTLAALIFTATMVVARGLAP), 207-227 (LAGFIVLLALIQIYLGGLVAG), 268-288 (FVHRLGAYTVFAVALWHMIAT), 301-321 (ATLLFVLVLVQASIGIGTLLM), and 323-343 (VPLHMALTHQGFALIVLGFAA). His-270 is a heme binding site. Residue His-331 participates in heme binding.

Belongs to the COX15/CtaA family. Type 2 subfamily. As to quaternary structure, interacts with CtaB. Requires heme b as cofactor.

It localises to the cell membrane. The enzyme catalyses Fe(II)-heme o + 2 A + H2O = Fe(II)-heme a + 2 AH2. It participates in porphyrin-containing compound metabolism; heme A biosynthesis; heme A from heme O: step 1/1. Its function is as follows. Catalyzes the conversion of heme O to heme A by two successive hydroxylations of the methyl group at C8. The first hydroxylation forms heme I, the second hydroxylation results in an unstable dihydroxymethyl group, which spontaneously dehydrates, resulting in the formyl group of heme A. In Mesorhizobium japonicum (strain LMG 29417 / CECT 9101 / MAFF 303099) (Mesorhizobium loti (strain MAFF 303099)), this protein is Heme A synthase.